Consider the following 318-residue polypeptide: Mitochondrial coenzyme A transporter SLC25A42 (318 aa).

3 Solcar repeats span residues 31–117 (RQVL…YKRI), 129–214 (LPPW…LKSL), and 224–312 (PYPF…MQIL). 6 helical membrane passes run 33-53 (VLSSLLSGALAGALAKTAVAP), 89-109 (LWRGNSATMVRVVPYAAIQFS), 135-155 (LFAGALAGTTAASLTYPLDLV), 186-206 (LYHGFMPTVLGVIPYAGLSFF), 230-250 (MIFGACAGLIGQSASYPLDVV), and 293-313 (VKGPIAVGISFTTFDLMQILL).

This sequence belongs to the mitochondrial carrier (TC 2.A.29) family.

It localises to the mitochondrion inner membrane. The catalysed reaction is ADP(out) + CoA(in) = ADP(in) + CoA(out). The enzyme catalyses 3'-dephospho-CoA(in) + ADP(out) = 3'-dephospho-CoA(out) + ADP(in). It carries out the reaction adenosine 3',5'-bisphosphate(in) + ADP(out) = adenosine 3',5'-bisphosphate(out) + ADP(in). It catalyses the reaction AMP(in) + ADP(out) = AMP(out) + ADP(in). The catalysed reaction is dADP(in) + ADP(out) = dADP(out) + ADP(in). The enzyme catalyses ADP(in) + ATP(out) = ADP(out) + ATP(in). Functionally, mitochondrial carrier mediating the transport of coenzyme A (CoA) in mitochondria in exchange for intramitochondrial (deoxy)adenine nucleotides and adenosine 3',5'-diphosphate. The sequence is that of Mitochondrial coenzyme A transporter SLC25A42 (SLC25A42) from Homo sapiens (Human).